The primary structure comprises 624 residues: Plastin-2 (624 aa).

2 consecutive EF-hand domains span residues 9–44 (EEME…ANLP) and 49–84 (RVRE…LKSS). Residues Asp22, Asp24, Asn26, His28, Glu33, Asp62, Asn64, Asp66, Lys68, and Glu73 each coordinate Ca(2+). 4 Calponin-homology (CH) domains span residues 118–234 (EEEK…KIGL), 262–373 (LSPE…NKYP), 392–501 (TREE…RRYT), and 513–621 (KIID…ARGM). 2 actin-binding regions span residues 118-373 (EEEK…NKYP) and 392-621 (TREE…ARGM).

In terms of assembly, monomer. In terms of tissue distribution, expressed by macrophages (at protein level).

It is found in the cytoplasm. The protein resides in the cytoskeleton. The protein localises to the cell junction. Its subcellular location is the cell projection. It localises to the ruffle membrane. Its function is as follows. Actin-binding protein. Plays a role in the activation of T-cells. The chain is Plastin-2 from Danio rerio (Zebrafish).